Reading from the N-terminus, the 57-residue chain is Potassium channel toxin alpha-KTx 4.2 (57 aa).

An N-terminal signal peptide occupies residues 1 to 20; it reads MKVLYGILIIFILCSMFYLS. A propeptide spans 21 to 22 (removed by a carboxypeptidase); that stretch reads QE. 3 cysteine pairs are disulfide-bonded: cysteine 29–cysteine 50, cysteine 35–cysteine 55, and cysteine 39–cysteine 57.

This sequence belongs to the short scorpion toxin superfamily. Potassium channel inhibitor family. Alpha-KTx 04 subfamily. Expressed by the venom gland.

Its subcellular location is the secreted. Blocker for small-conductance calcium-activated potassium channels KCa2.2/KCNN2 (Kd=80 nM) and KCa2.3/KCNN3 (Kd=197 nM) and ERG1/Kv11.1/KCNH2 potassium channels (53% inhibition at 5 uM). Has also been shown to inhibit Kv1.1/KCNA1 and Nav1.7/SCN9A with a moderate potency, as well as Kv11.1/KCNH2/ERG1 and Kv1.2/KCNA2 with a low potency. In Tityus serrulatus (Brazilian scorpion), this protein is Potassium channel toxin alpha-KTx 4.2.